The primary structure comprises 408 residues: 3-ketoacyl-CoA thiolase A, peroxisomal (408 aa).

Cys-112 acts as the Acyl-thioester intermediate in catalysis. Residues His-366 and Cys-394 each act as proton acceptor in the active site.

It belongs to the thiolase-like superfamily. Thiolase family. As to quaternary structure, homodimer.

The protein resides in the peroxisome. It catalyses the reaction an acyl-CoA + acetyl-CoA = a 3-oxoacyl-CoA + CoA. The protein operates within lipid metabolism; fatty acid metabolism. The chain is 3-ketoacyl-CoA thiolase A, peroxisomal from Candida tropicalis (Yeast).